Here is a 503-residue protein sequence, read N- to C-terminus: Probable DNA ligase (503 aa).

Asp-212 lines the ATP pocket. Lys-214 (N6-AMP-lysine intermediate) is an active-site residue. The ATP site is built by Arg-219, Arg-234, Glu-263, Phe-296, Arg-368, and Lys-374.

It belongs to the ATP-dependent DNA ligase family. Mg(2+) serves as cofactor.

It carries out the reaction ATP + (deoxyribonucleotide)n-3'-hydroxyl + 5'-phospho-(deoxyribonucleotide)m = (deoxyribonucleotide)n+m + AMP + diphosphate.. Functionally, DNA ligase that seals nicks in double-stranded DNA during DNA replication, DNA recombination and DNA repair. This Kineococcus radiotolerans (strain ATCC BAA-149 / DSM 14245 / SRS30216) protein is Probable DNA ligase.